Reading from the N-terminus, the 2130-residue chain is Highly reducing polyketide synthase anuA (2130 aa).

Positions 1 to 213 (MKAGVLSGTS…GANCHVILEQ (213 aa)) constitute a Ketosynthase family 3 (KS3) domain. Positions 317–644 (FVFTGQGSQW…SFAGNLWLKG (328 aa)) constitute a Malonyl-CoA:ACP transacylase (MAT) domain. The interval 701 to 836 (HELLGSLLTG…GSIAIHPRNA (136 aa)) is N-terminal hotdog fold. The PKS/mFAS DH domain occupies 701–1000 (HELLGSLLTG…LSPYQSTSQA (300 aa)). His-733 acts as the Proton acceptor; for dehydratase activity in catalysis. The C-terminal hotdog fold stretch occupies residues 849–1000 (LESTAKRTWY…LSPYQSTSQA (152 aa)). The active-site Proton donor; for dehydratase activity is the Asp-914. In terms of domain architecture, Enoyl reductase (ER) spans 1405–1722 (GQLDTIYFQQ…SRSRIGKVAI (318 aa)). Residues 1747-1927 (SYVMVGCLGG…AVAVGLGMIS (181 aa)) form the Ketoreductase (KR) domain. The Carrier domain maps to 2047-2125 (TLDEAVLDHI…SLRDLAMTSL (79 aa)). An O-(pantetheine 4'-phosphoryl)serine modification is found at Ser-2084.

It depends on pantetheine 4'-phosphate as a cofactor.

It participates in secondary metabolite biosynthesis. Its function is as follows. Highly reducing polyketide synthase; part of the gene cluster that mediates the biosynthesis of annullatin D, an alkylated aromatic polyketide with a fused dihydrobenzofuran lactone ring system that exhibits potent agonistic activities toward the cannabinoid receptors. The annullatin backbone 2-hydroxymethyl-3-pentylphenol is assembled from one acetyl-CoA starter unit and 5 malonyl-CoA elongation units by cooperation of the highly reducing polyketide synthase anuA, the short-chain dehydrogenase anuB and the oxidoreductase anuC, before being hydroxylated at the C-5 alkyl chain by the cytochrome P450 monooxygenase anuE to form (8S)-annullatin E. The prenyltransferase anuH subsequently installs one isoprenyl group at the benzene ring to form (8S)-annullatin J. Enzymatic or nonenzymatic dihydro-benzofuran ring formation between the prenyl and the phenolic hydroxyl groups in (8S)-annullatin J results in two diastereomers (2S,9S)-annullatin H and compound 12. The intermediate (2S,9S)-annullatin H is then converted to (2S,9S)-annullatin D by the FAD-linked oxidoreductase anuG-catalyzed five-member lactone ring formation. The isomer 12 acts as a substrate for the short-chain dehydrogenase anuF and is oxidized to (2R)-annullatin F, which is subsequently acetylated by an acetyltransferase leading to (2R)-annullatin G formation. The remaining enzymes identified within the cluster, anuD, anuI and anuJ, seem not to be involved in annullatin biosynthesis. This is Highly reducing polyketide synthase anuA from Penicillium roqueforti (strain FM164).